The following is a 448-amino-acid chain: Exodeoxyribonuclease 7 large subunit (448 aa).

Belongs to the XseA family. Heterooligomer composed of large and small subunits.

It is found in the cytoplasm. The enzyme catalyses Exonucleolytic cleavage in either 5'- to 3'- or 3'- to 5'-direction to yield nucleoside 5'-phosphates.. Bidirectionally degrades single-stranded DNA into large acid-insoluble oligonucleotides, which are then degraded further into small acid-soluble oligonucleotides. This chain is Exodeoxyribonuclease 7 large subunit, found in Hamiltonella defensa subsp. Acyrthosiphon pisum (strain 5AT).